Consider the following 619-residue polypeptide: Chaperone protein HscA homolog (619 aa).

The protein belongs to the heat shock protein 70 family.

Chaperone involved in the maturation of iron-sulfur cluster-containing proteins. Has a low intrinsic ATPase activity which is markedly stimulated by HscB. In Pseudomonas aeruginosa (strain UCBPP-PA14), this protein is Chaperone protein HscA homolog.